Here is a 237-residue protein sequence, read N- to C-terminus: tRNA (guanine-N(7)-)-methyltransferase (237 aa).

4 residues coordinate S-adenosyl-L-methionine: Glu-67, Glu-92, Asp-119, and Asp-141. Asp-141 is a catalytic residue. Residues Lys-145, Asp-177, and 214–217 (TRYE) contribute to the substrate site.

The protein belongs to the class I-like SAM-binding methyltransferase superfamily. TrmB family.

It catalyses the reaction guanosine(46) in tRNA + S-adenosyl-L-methionine = N(7)-methylguanosine(46) in tRNA + S-adenosyl-L-homocysteine. Its pathway is tRNA modification; N(7)-methylguanine-tRNA biosynthesis. Functionally, catalyzes the formation of N(7)-methylguanine at position 46 (m7G46) in tRNA. This is tRNA (guanine-N(7)-)-methyltransferase from Ruegeria pomeroyi (strain ATCC 700808 / DSM 15171 / DSS-3) (Silicibacter pomeroyi).